The following is a 184-amino-acid chain: MLHSALLNGVIMVGIILVINIIYVTFLTLRMILTLKGQRYLAAFIGTIEMLVYVVGLGLVLDNLNQIQNVIAYAVGFGIGIIVGTKIEEKLALGYITVNAITKELDLDLPKQLREKGYGVTHWVVGGLEGDRTAMQILTPRKYELQLYETIKSIDSKAFIISYEPKTIHGGFWVKAVKKRRIKE.

3 consecutive transmembrane segments (helical) span residues 9–29, 41–61, and 67–87; these read GVIMVGIILVINIIYVTFLTL, LAAFIGTIEMLVYVVGLGLVL, and IQNVIAYAVGFGIGIIVGTKI.

It belongs to the UPF0316 family.

The protein localises to the cell membrane. This is UPF0316 protein BLi00691/BL01474 from Bacillus licheniformis (strain ATCC 14580 / DSM 13 / JCM 2505 / CCUG 7422 / NBRC 12200 / NCIMB 9375 / NCTC 10341 / NRRL NRS-1264 / Gibson 46).